Consider the following 246-residue polypeptide: Transcription factor A, mitochondrial (246 aa).

The transit peptide at 1 to 42 (MALLRGVWGVLNALGKSGADLCAGCGSRLRYPFSFAYVPKWF) directs the protein to the mitochondrion. Residues 50–118 (PKKPMTSYVR…VYKEEINRIQ (69 aa)) constitute a DNA-binding region (HMG box 1). Residues Ser56 and Ser61 each carry the phosphoserine; by PKA modification. Position 122 is a phosphothreonine (Thr122). The segment at residues 155 to 219 (PKRPRSAYNI…RYYNEMKSWE (65 aa)) is a DNA-binding region (HMG box 2). Position 160 is a phosphoserine; by PKA (Ser160). Ser193 and Ser195 each carry phosphoserine.

Monomer; binds DNA as a monomer. Homodimer. Component of the mitochondrial transcription initiation complex, composed at least of TFB2M, TFAM and POLRMT. In this complex TFAM recruits POLRMT to the promoter whereas TFB2M induces structural changes in POLRMT to enable promoter opening and trapping of the DNA non-template strand. Upon metabolic stress, forms a complex composed of FOXO3, SIRT3, TFAM and POLRMT. Interacts with TFB1M and TFB2M. Interacts with CLPX; this enhances DNA-binding. In terms of processing, phosphorylation by PKA within the HMG box 1 impairs DNA binding and promotes degradation by the AAA+ Lon protease.

Its subcellular location is the mitochondrion. The protein resides in the mitochondrion matrix. It localises to the mitochondrion nucleoid. In terms of biological role, binds to the mitochondrial light strand promoter and functions in mitochondrial transcription regulation. Component of the mitochondrial transcription initiation complex, composed at least of TFB2M, TFAM and POLRMT that is required for basal transcription of mitochondrial DNA. In this complex, TFAM recruits POLRMT to a specific promoter whereas TFB2M induces structural changes in POLRMT to enable promoter opening and trapping of the DNA non-template strand. Required for accurate and efficient promoter recognition by the mitochondrial RNA polymerase. Promotes transcription initiation from the HSP1 and the light strand promoter by binding immediately upstream of transcriptional start sites. Is able to unwind DNA. Bends the mitochondrial light strand promoter DNA into a U-turn shape via its HMG boxes. Required for maintenance of normal levels of mitochondrial DNA. May play a role in organizing and compacting mitochondrial DNA. This chain is Transcription factor A, mitochondrial, found in Bos taurus (Bovine).